Consider the following 238-residue polypeptide: Sugar fermentation stimulation protein homolog (238 aa).

This sequence belongs to the SfsA family.

The sequence is that of Sugar fermentation stimulation protein homolog from Alkalilimnicola ehrlichii (strain ATCC BAA-1101 / DSM 17681 / MLHE-1).